A 647-amino-acid polypeptide reads, in one-letter code: C2H2 finger domain transcription factor USV101 (647 aa).

The segment covering 1–10 (MSFVAPDDRA) has biased composition (basic and acidic residues). A disordered region spans residues 1–132 (MSFVAPDDRA…ATGYTPDGQP (132 aa)). Polar residues-rich tracts occupy residues 27–54 (ESTSPDQRLPSSHSYNKSASAPNESPNQ) and 66–84 (SSHSYPPQPMTPLTGSTAY). Residues 97-122 (PTQQQQQQQSEQHIPSPPSSSNRPPS) are compositionally biased toward low complexity. 2 consecutive C2H2-type zinc fingers follow at residues 144 to 169 (FRCRGYGDCDKVFTRSEHLARHVRKH) and 175 to 197 (FPCHCGKAFSRLDNLRQHAATVH). Residues 220–647 (QRASREQRRR…VKQQDDKKTQ (428 aa)) form a disordered region. The segment covering 222–248 (ASREQRRRGEVVEVPKGAVERRRETRK) has biased composition (basic and acidic residues). A compositionally biased stretch (low complexity) spans 249 to 259 (AQAAAAQAAAA). Over residues 261–278 (GHSQQNSPYAQYHESQWN) the composition is skewed to polar residues. 3 stretches are compositionally biased toward low complexity: residues 312–327 (SSSAGYGYQQGYYDSA), 404–414 (HGAYPPHDAAA), and 421–434 (GYYHPAHAAHGSYP). Over residues 504 to 515 (RAEDDFGKDDRK) the composition is skewed to basic and acidic residues. The span at 521-540 (SPSNSQVPDSSTAAHANGAH) shows a compositional bias: low complexity. Over residues 628–647 (VDKEREKKEEVKQQDDKKTQ) the composition is skewed to basic and acidic residues.

The protein localises to the nucleus. It is found in the cytoplasm. Transcription factor that promotes pheromone gene expression, which results in a subsequent increase in cell fusion. Also promotes production of melanin and capsule and thereby is required for full virulence. The protein is C2H2 finger domain transcription factor USV101 of Cryptococcus neoformans var. grubii serotype A (strain H99 / ATCC 208821 / CBS 10515 / FGSC 9487) (Filobasidiella neoformans var. grubii).